The following is a 344-amino-acid chain: Fructose-bisphosphate aldolase (344 aa).

Residue serine 53 coordinates D-glyceraldehyde 3-phosphate. Aspartate 95 serves as the catalytic Proton donor. Zn(2+) contacts are provided by histidine 96, aspartate 131, glutamate 161, and histidine 212. Position 213 (glycine 213) interacts with dihydroxyacetone phosphate. Residue histidine 252 participates in Zn(2+) binding. Residues 253–255 (GGS) and 274–277 (NVDT) each bind dihydroxyacetone phosphate.

The protein belongs to the class II fructose-bisphosphate aldolase family. Requires Zn(2+) as cofactor.

It catalyses the reaction beta-D-fructose 1,6-bisphosphate = D-glyceraldehyde 3-phosphate + dihydroxyacetone phosphate. The protein operates within carbohydrate degradation; glycolysis; D-glyceraldehyde 3-phosphate and glycerone phosphate from D-glucose: step 4/4. Catalyzes the aldol condensation of dihydroxyacetone phosphate (DHAP or glycerone-phosphate) with glyceraldehyde 3-phosphate (G3P) to form fructose 1,6-bisphosphate (FBP) in gluconeogenesis and the reverse reaction in glycolysis. This chain is Fructose-bisphosphate aldolase (fba), found in Mycobacterium bovis (strain ATCC BAA-935 / AF2122/97).